We begin with the raw amino-acid sequence, 212 residues long: Protein-L-isoaspartate O-methyltransferase 1 (212 aa).

Residue S60 is part of the active site.

This sequence belongs to the methyltransferase superfamily. L-isoaspartyl/D-aspartyl protein methyltransferase family.

It is found in the cytoplasm. The enzyme catalyses [protein]-L-isoaspartate + S-adenosyl-L-methionine = [protein]-L-isoaspartate alpha-methyl ester + S-adenosyl-L-homocysteine. In terms of biological role, catalyzes the methyl esterification of L-isoaspartyl residues in peptides and proteins that result from spontaneous decomposition of normal L-aspartyl and L-asparaginyl residues. It plays a role in the repair and/or degradation of damaged proteins. The protein is Protein-L-isoaspartate O-methyltransferase 1 of Anaeromyxobacter sp. (strain Fw109-5).